The following is a 208-amino-acid chain: Ribosomal RNA small subunit methyltransferase G (208 aa).

S-adenosyl-L-methionine-binding positions include glycine 74, leucine 79, 125-126, and arginine 140; that span reads VE.

It belongs to the methyltransferase superfamily. RNA methyltransferase RsmG family.

The protein resides in the cytoplasm. The catalysed reaction is guanosine(527) in 16S rRNA + S-adenosyl-L-methionine = N(7)-methylguanosine(527) in 16S rRNA + S-adenosyl-L-homocysteine. Functionally, specifically methylates the N7 position of guanine in position 527 of 16S rRNA. This is Ribosomal RNA small subunit methyltransferase G from Shewanella denitrificans (strain OS217 / ATCC BAA-1090 / DSM 15013).